The primary structure comprises 470 residues: Glutamate--tRNA ligase 2 (470 aa).

A 'HIGH' region motif is present at residues 10–20; sequence PSPTGFLHIGS. The 'KMSKS' region motif lies at 239 to 243; the sequence is KLSKR. K242 serves as a coordination point for ATP.

Belongs to the class-I aminoacyl-tRNA synthetase family. Glutamate--tRNA ligase type 1 subfamily. Monomer.

The protein resides in the cytoplasm. It carries out the reaction tRNA(Glu) + L-glutamate + ATP = L-glutamyl-tRNA(Glu) + AMP + diphosphate. In terms of biological role, catalyzes the attachment of glutamate to tRNA(Glu) in a two-step reaction: glutamate is first activated by ATP to form Glu-AMP and then transferred to the acceptor end of tRNA(Glu). The polypeptide is Glutamate--tRNA ligase 2 (Rickettsia prowazekii (strain Madrid E)).